We begin with the raw amino-acid sequence, 435 residues long: Putative F-box/kelch-repeat protein At1g13200 (435 aa).

Residues 1-29 (MKDAEKREVIASSSLQRKRNRGRRLRKRR) are disordered. Residues 16 to 29 (QRKRNRGRRLRKRR) show a composition bias toward basic residues. In terms of domain architecture, F-box spans 37 to 82 (LMVPSSLPNDVLEEIFLRFPVKALIRLKSLSKQWRSTIESRSFEER). 4 Kelch repeats span residues 164–217 (SVYV…DYKL), 224–270 (DKYI…PASA), 273–317 (SVYW…HIDM), and 322–368 (NSLC…EKRD).

In Arabidopsis thaliana (Mouse-ear cress), this protein is Putative F-box/kelch-repeat protein At1g13200.